The following is a 527-amino-acid chain: Putative zinc finger CCCH domain-containing protein 64 (527 aa).

A disordered region spans residues 103–127 (GQLRSTQTTSKRKAASRKGQREQRV). A C3H1-type zinc finger spans residues 213 to 241 (RPGEPFCRYYMKFGECKHMTFCKYNHPKD).

In Oryza sativa subsp. japonica (Rice), this protein is Putative zinc finger CCCH domain-containing protein 64.